Consider the following 896-residue polypeptide: Valine--tRNA ligase (896 aa).

The short motif at 48 to 58 (PNVTGSLHMGH) is the 'HIGH' region element. Residues 543-547 (KMSKS) carry the 'KMSKS' region motif. Lys-546 lines the ATP pocket. Residues 830–896 (VIDLDAERTR…ARLGAALERL (67 aa)) are a coiled coil.

It belongs to the class-I aminoacyl-tRNA synthetase family. ValS type 1 subfamily. Monomer.

It localises to the cytoplasm. It catalyses the reaction tRNA(Val) + L-valine + ATP = L-valyl-tRNA(Val) + AMP + diphosphate. Catalyzes the attachment of valine to tRNA(Val). As ValRS can inadvertently accommodate and process structurally similar amino acids such as threonine, to avoid such errors, it has a 'posttransfer' editing activity that hydrolyzes mischarged Thr-tRNA(Val) in a tRNA-dependent manner. In Granulibacter bethesdensis (strain ATCC BAA-1260 / CGDNIH1), this protein is Valine--tRNA ligase.